A 233-amino-acid polypeptide reads, in one-letter code: Large ribosomal subunit protein uL1 (233 aa).

It belongs to the universal ribosomal protein uL1 family. Part of the 50S ribosomal subunit.

Its function is as follows. Binds directly to 23S rRNA. The L1 stalk is quite mobile in the ribosome, and is involved in E site tRNA release. In terms of biological role, protein L1 is also a translational repressor protein, it controls the translation of the L11 operon by binding to its mRNA. The protein is Large ribosomal subunit protein uL1 of Aeromonas hydrophila subsp. hydrophila (strain ATCC 7966 / DSM 30187 / BCRC 13018 / CCUG 14551 / JCM 1027 / KCTC 2358 / NCIMB 9240 / NCTC 8049).